A 357-amino-acid polypeptide reads, in one-letter code: Homoserine kinase (357 aa).

A Glycyl lysine isopeptide (Lys-Gly) (interchain with G-Cter in ubiquitin) cross-link involves residue Lys-133.

It belongs to the GHMP kinase family. Homoserine kinase subfamily. Homodimer.

The catalysed reaction is L-homoserine + ATP = O-phospho-L-homoserine + ADP + H(+). The protein operates within amino-acid biosynthesis; L-threonine biosynthesis; L-threonine from L-aspartate: step 4/5. In terms of biological role, commits homoserine to the threonine biosynthesis pathway by catalyzing its O-phosphorylation. The polypeptide is Homoserine kinase (THR1) (Saccharomyces cerevisiae (strain ATCC 204508 / S288c) (Baker's yeast)).